A 232-amino-acid chain; its full sequence is Pyridoxine 5'-phosphate synthase (232 aa).

N7 serves as a coordination point for 3-amino-2-oxopropyl phosphate. 9 to 10 (DH) provides a ligand contact to 1-deoxy-D-xylulose 5-phosphate. A 3-amino-2-oxopropyl phosphate-binding site is contributed by R18. H43 acts as the Proton acceptor in catalysis. The 1-deoxy-D-xylulose 5-phosphate site is built by R45 and H50. The active-site Proton acceptor is the E69. T99 serves as a coordination point for 1-deoxy-D-xylulose 5-phosphate. H185 (proton donor) is an active-site residue. 3-amino-2-oxopropyl phosphate-binding positions include G186 and 207 to 208 (GH).

Belongs to the PNP synthase family. In terms of assembly, homooctamer; tetramer of dimers.

The protein resides in the cytoplasm. It catalyses the reaction 3-amino-2-oxopropyl phosphate + 1-deoxy-D-xylulose 5-phosphate = pyridoxine 5'-phosphate + phosphate + 2 H2O + H(+). The protein operates within cofactor biosynthesis; pyridoxine 5'-phosphate biosynthesis; pyridoxine 5'-phosphate from D-erythrose 4-phosphate: step 5/5. Functionally, catalyzes the complicated ring closure reaction between the two acyclic compounds 1-deoxy-D-xylulose-5-phosphate (DXP) and 3-amino-2-oxopropyl phosphate (1-amino-acetone-3-phosphate or AAP) to form pyridoxine 5'-phosphate (PNP) and inorganic phosphate. In Gluconobacter oxydans (strain 621H) (Gluconobacter suboxydans), this protein is Pyridoxine 5'-phosphate synthase.